The following is a 670-amino-acid chain: DNA ligase (670 aa).

NAD(+)-binding positions include 32–36, 81–82, and glutamate 113; these read DAEYD and SL. Residue lysine 115 is the N6-AMP-lysine intermediate of the active site. The NAD(+) site is built by arginine 136, glutamate 173, lysine 290, and lysine 314. Zn(2+)-binding residues include cysteine 406, cysteine 409, cysteine 424, and cysteine 430. The BRCT domain maps to 592-670; it reads EIDSPFAGKT…EQEMMRLLGE (79 aa).

It belongs to the NAD-dependent DNA ligase family. LigA subfamily. The cofactor is Mg(2+). Mn(2+) is required as a cofactor.

It catalyses the reaction NAD(+) + (deoxyribonucleotide)n-3'-hydroxyl + 5'-phospho-(deoxyribonucleotide)m = (deoxyribonucleotide)n+m + AMP + beta-nicotinamide D-nucleotide.. In terms of biological role, DNA ligase that catalyzes the formation of phosphodiester linkages between 5'-phosphoryl and 3'-hydroxyl groups in double-stranded DNA using NAD as a coenzyme and as the energy source for the reaction. It is essential for DNA replication and repair of damaged DNA. This Erwinia tasmaniensis (strain DSM 17950 / CFBP 7177 / CIP 109463 / NCPPB 4357 / Et1/99) protein is DNA ligase.